The following is a 227-amino-acid chain: Pre-hexon-linking protein VIII (227 aa).

Phosphothreonine; by host is present on threonine 64. A propeptide spanning residues 112–157 (FRHRVRSPGQGITHLTIRGRGIQLNDESVSSSLGLRPDGTFQIGGA) is cleaved from the precursor. 2 positions are modified to phosphoserine; by host: serine 118 and serine 174.

This sequence belongs to the adenoviridae hexon-linking protein family. Interacts with the peripentonal hexons as well as the hexons in the facets. Part of a complex composed of the core-capsid bridging protein, the endosome lysis protein VI and the hexon-linking protein VIII; these interactions bridge the virus core to the capsid. Cleaved by the viral protease during virion maturation. May cause the middle segment to be shed from the capsid.

The protein localises to the virion. The protein resides in the host nucleus. Its function is as follows. Structural component of the virion that acts as a cement protein on the capsid interior and which glue the peripentonal hexons and group-of-nine hexons together. The protein is Pre-hexon-linking protein VIII of Human adenovirus C serotype 5 (HAdV-5).